A 312-amino-acid chain; its full sequence is MLLRSRFLKVIHVRKQLSACSRFAIQTQTRCKSTDASEDEVKHFQELAPTWWDTDGSQRILHKMNLTRLDFVQRTVRNQVKIQNPEIFVPGFNYKEFLPEYVCDNIQREMQESIETNLDKRPEVSVLDVGCGGGILSESLARLKWVKNVQGIDLTRDCIMVAKEHAKKDPMLEGKINYECKALEDVTGQFDIITCMEMLEHVDMPSEILRHCWSRLNPEKGILFLSTINRDLISWFTTIFMGENVLKIVPKGTHHLSKYINSKEILAWFNDNYSGQFRLLDLKGTMYLPYQGWVEHDCSDVGNYFMAIQRLN.

A mitochondrion-targeting transit peptide spans 1-32 (MLLRSRFLKVIHVRKQLSACSRFAIQTQTRCK). S-adenosyl-L-methionine is bound by residues Arg-68, Gly-130, Asp-153, and Met-196. Mg(2+) contacts are provided by Glu-197, Glu-200, and His-201.

It belongs to the class I-like SAM-binding methyltransferase superfamily. UbiG/COQ3 family. Component of a multi-subunit COQ enzyme complex, composed of at least COQ3, COQ4, COQ5, COQ6, COQ7 and COQ9. Interacts directly with COQ4. Mg(2+) serves as cofactor.

It localises to the mitochondrion inner membrane. The enzyme catalyses 3,4-dihydroxy-5-(all-trans-hexaprenyl)benzoate + S-adenosyl-L-methionine = 4-hydroxy-3-methoxy-5-(all-trans-hexaprenyl)benzoate + S-adenosyl-L-homocysteine + H(+). The catalysed reaction is a 3-demethylubiquinone + S-adenosyl-L-methionine = a ubiquinone + S-adenosyl-L-homocysteine. It catalyses the reaction 3-demethylubiquinol-6 + S-adenosyl-L-methionine = ubiquinol-6 + S-adenosyl-L-homocysteine + H(+). It functions in the pathway cofactor biosynthesis; ubiquinone biosynthesis. With respect to regulation, regulated in response to catabolite repression. O-methyltransferase required for two non-consecutive steps during ubiquinone biosynthesis. Catalyzes the 2 O-methylation of 3,4-dihydroxy-5-(all-trans-hexaprenyl)benzoic acid into 4-hydroxy-3-methoxy-5-(all-trans-hexaprenyl)benzoic acid. Also catalyzes the last step of ubiquinone biosynthesis by mediating methylation of 3-demethylubiquinone into ubiquinone. Also able to mediate the methylation of 3-demethylubiquinol-6 into ubiquinol-6. The protein is Ubiquinone biosynthesis O-methyltransferase, mitochondrial of Saccharomyces cerevisiae (strain ATCC 204508 / S288c) (Baker's yeast).